We begin with the raw amino-acid sequence, 419 residues long: MSTQTPQPIRGTQDIFGPDAEAFAFVVETFERVRKLYRFRRVEMPVFEKTAVFSRSLGETTDVVSKEMYSFEDRGGESLTLRPEFTAGIARAYLTDGWQQYAPLKVATHGPLFRYERPQKGRYRQFHQIDAEIIGAGEPQADVELLVMADQLLKELGIGANDPGAVTLQLNTLGDGASREAWRAALVEYFRAHKAELSEDSQDRLERNPLRILDSKDPRDKPFTADAPRIDDFLSAEAQDFFGKVTSGLDAAGVEWTRAPALVRGLDYYRHTAFEFVTDRLGAQGTVLGGGRYDGLMEALGGAATPAVGWAAGIERLAMLVGEKGEARTDVIVVVEDDALLTSGIEQVSRLRREGVSAELVASGSARKRFDKAVKMGAKAILALAMRDGQPAARFRVEDDAATALRGQLEAAVAKYGAQ.

It belongs to the class-II aminoacyl-tRNA synthetase family. In terms of assembly, homodimer.

Its subcellular location is the cytoplasm. The catalysed reaction is tRNA(His) + L-histidine + ATP = L-histidyl-tRNA(His) + AMP + diphosphate + H(+). The sequence is that of Histidine--tRNA ligase from Novosphingobium aromaticivorans (strain ATCC 700278 / DSM 12444 / CCUG 56034 / CIP 105152 / NBRC 16084 / F199).